The primary structure comprises 332 residues: Multiple virulence factor regulator MvfR (332 aa).

The 58-residue stretch at 4–61 (HNLNHVNMFLQVIASGSISSAARILRKSHTAVSSAVSNLEIDLCVELVRRDGYKVEPT) folds into the HTH lysR-type domain. Residues 21–40 (ISSAARILRKSHTAVSSAVS) constitute a DNA-binding region (H-T-H motif).

It belongs to the LysR transcriptional regulatory family. In terms of assembly, forms homooligomers.

Its subcellular location is the cell inner membrane. It localises to the secreted. Its activity is regulated as follows. Both 3,4-dihydroxy-2-heptylquinoline (PQS) and its precursor 4-hydroxy-2-heptylquinoline (HHQ) function as ligands and promote MvfR DNA-binding activity leading to transcriptional activation. Transcription regulator that plays a critical role in virulence by positively regulating the expression of multiple quorum sensing (QS)-regulated virulence factors, genes involved in protein secretion, translation, response to oxidative stress and the phnAB operon. At the stationary phase, negatively autoregulates its function through cleavage and translocation to the extracellular space. In Pseudomonas aeruginosa (strain ATCC 15692 / DSM 22644 / CIP 104116 / JCM 14847 / LMG 12228 / 1C / PRS 101 / PAO1), this protein is Multiple virulence factor regulator MvfR.